A 287-amino-acid polypeptide reads, in one-letter code: MPKINTSSSGWLADISLFYEKRGTNTKLVHREQVGPLMVQRPFYPETGIAHTYLLHPPGGVVGGDQLNINIHVSPQAHSLLTTPGATKFYRSSGATSSQTQNLTVESDGFLEWLPQENIFFPDSQAQLKTQVELHKNAHFIGWEMNCFGRPVLDEIFENGFVTGRTNIKVDDQLLLSESMYIDSIDEIKHAAGMRHYPMLGNLYIYPASEALEEKLRTLIDENFHEQPELFGSSNPICGITEIDGLLVIRYLGHQTEPMMACFSTLWQHTRQHWLGKLPEVPRIWAT.

Belongs to the UreD family. As to quaternary structure, ureD, UreF and UreG form a complex that acts as a GTP-hydrolysis-dependent molecular chaperone, activating the urease apoprotein by helping to assemble the nickel containing metallocenter of UreC. The UreE protein probably delivers the nickel.

The protein resides in the cytoplasm. Required for maturation of urease via the functional incorporation of the urease nickel metallocenter. The sequence is that of Urease accessory protein UreD from Aliivibrio fischeri (strain ATCC 700601 / ES114) (Vibrio fischeri).